Reading from the N-terminus, the 278-residue chain is Pantothenate synthetase (278 aa).

An ATP-binding site is contributed by 27–34; that stretch reads MGYLHEGH. Residue H34 is the Proton donor of the active site. (R)-pantoate is bound at residue Q58. Q58 contacts beta-alanine. 144–147 contributes to the ATP binding site; that stretch reads GQKD. Q150 contacts (R)-pantoate. ATP-binding positions include V173 and 181–184; that span reads MSSR.

Belongs to the pantothenate synthetase family. In terms of assembly, homodimer.

The protein localises to the cytoplasm. The enzyme catalyses (R)-pantoate + beta-alanine + ATP = (R)-pantothenate + AMP + diphosphate + H(+). It functions in the pathway cofactor biosynthesis; (R)-pantothenate biosynthesis; (R)-pantothenate from (R)-pantoate and beta-alanine: step 1/1. Functionally, catalyzes the condensation of pantoate with beta-alanine in an ATP-dependent reaction via a pantoyl-adenylate intermediate. In Roseiflexus sp. (strain RS-1), this protein is Pantothenate synthetase.